The primary structure comprises 447 residues: DNA primase DnaG (447 aa).

The Toprim domain occupies 200–274 (DSIIVVEGRA…DIDYVARAPE (75 aa)). Residues Glu-206, Asp-248, and Asp-250 each contribute to the Mg(2+) site.

It belongs to the archaeal DnaG primase family. Forms a ternary complex with MCM helicase and DNA. Component of the archaeal exosome complex. Mg(2+) is required as a cofactor.

The enzyme catalyses ssDNA + n NTP = ssDNA/pppN(pN)n-1 hybrid + (n-1) diphosphate.. RNA polymerase that catalyzes the synthesis of short RNA molecules used as primers for DNA polymerase during DNA replication. Also part of the exosome, which is a complex involved in RNA degradation. Acts as a poly(A)-binding protein that enhances the interaction between heteromeric, adenine-rich transcripts and the exosome. This is DNA primase DnaG from Pyrococcus horikoshii (strain ATCC 700860 / DSM 12428 / JCM 9974 / NBRC 100139 / OT-3).